A 345-amino-acid polypeptide reads, in one-letter code: G-protein coupled receptor family C group 5 member D (345 aa).

Over 1–27 the chain is Extracellular; it reads MYKDCIESTGDYFLLCDAEGPWGIILE. A helical membrane pass occupies residues 28–48; it reads SLAILGIVVTILLLLAFLFLM. The Cytoplasmic portion of the chain corresponds to 49-63; sequence RKIQDCSQWNVLPTQ. The chain crosses the membrane as a helical span at residues 64–84; sequence LLFLLSVLGLFGLAFAFIIEL. Topologically, residues 85–93 are extracellular; sequence NQQTAPVRY. The chain crosses the membrane as a helical span at residues 94-114; it reads FLFGVLFALCFSCLLAHASNL. The Cytoplasmic segment spans residues 115–123; that stretch reads VKLVRGCVS. The chain crosses the membrane as a helical span at residues 124–144; that stretch reads FSWTTILCIAIGCSLLQIIIA. At 145-167 the chain is on the extracellular side; the sequence is TEYVTLIMTRGMMFVNMTPCQLN. The chain crosses the membrane as a helical span at residues 168-188; that stretch reads VDFVVLLVYVLFLMALTFFVS. Residues 189 to 204 are Cytoplasmic-facing; the sequence is KATFCGPCENWKQHGR. Residues 205-225 traverse the membrane as a helical segment; it reads LIFITVLFSIIIWVVWISMLL. The Extracellular segment spans residues 226 to 239; sequence RGNPQFQRQPQWDD. The helical transmembrane segment at 240 to 260 threads the bilayer; it reads PVVCIALVTNAWVFLLLYIVP. The Cytoplasmic segment spans residues 261–345; that stretch reads ELCILYRSCR…LSPQQDAGGV (85 aa).

The protein belongs to the G-protein coupled receptor 3 family. In terms of assembly, homodimer. Widely expressed in the peripheral system. Expression pattern is high in pancreas, medium in kidney, small intestine, spleen and testis, low in lung, colon, leukocyte, prostate and thymus and not detectable in brain, heart, liver, placenta, skeletal muscle and ovary.

The protein localises to the cell membrane. G-protein coupled receptor involved in hard keratin expression and likely plays a role in the development of hair and nails. This chain is G-protein coupled receptor family C group 5 member D (GPRC5D), found in Homo sapiens (Human).